A 441-amino-acid chain; its full sequence is Amino-acid acetyltransferase (441 aa).

The 140-residue stretch at 295-434 (EKVRGAGIDD…KALYNFQRRS (140 aa)) folds into the N-acetyltransferase domain.

It belongs to the acetyltransferase family. ArgA subfamily.

Its subcellular location is the cytoplasm. The enzyme catalyses L-glutamate + acetyl-CoA = N-acetyl-L-glutamate + CoA + H(+). The protein operates within amino-acid biosynthesis; L-arginine biosynthesis; N(2)-acetyl-L-ornithine from L-glutamate: step 1/4. The polypeptide is Amino-acid acetyltransferase (Photobacterium profundum (strain SS9)).